A 149-amino-acid chain; its full sequence is Cell division protein SepF (149 aa).

It belongs to the SepF family. As to quaternary structure, homodimer. Interacts with FtsZ.

The protein resides in the cytoplasm. Cell division protein that is part of the divisome complex and is recruited early to the Z-ring. Probably stimulates Z-ring formation, perhaps through the cross-linking of FtsZ protofilaments. Its function overlaps with FtsA. This chain is Cell division protein SepF, found in Clostridium perfringens (strain ATCC 13124 / DSM 756 / JCM 1290 / NCIMB 6125 / NCTC 8237 / Type A).